A 508-amino-acid chain; its full sequence is Lysine--tRNA ligase (508 aa).

Residues glutamate 403 and glutamate 410 each contribute to the Mg(2+) site.

This sequence belongs to the class-II aminoacyl-tRNA synthetase family. Homodimer. Requires Mg(2+) as cofactor.

It localises to the cytoplasm. It carries out the reaction tRNA(Lys) + L-lysine + ATP = L-lysyl-tRNA(Lys) + AMP + diphosphate. The sequence is that of Lysine--tRNA ligase from Methanoculleus marisnigri (strain ATCC 35101 / DSM 1498 / JR1).